Here is a 100-residue protein sequence, read N- to C-terminus: Apolipoprotein C-II (100 aa).

The signal sequence occupies residues 1–22; that stretch reads MGSRFLLALFLVLLVLGYEVQG. The interval 66–74 is lipid binding; that stretch reads SVDEKLRDM. Positions 78–100 are lipoprotein lipase cofactor; that stretch reads SSAAVSTYAGIFTDQILTLLKGE.

The protein belongs to the apolipoprotein C2 family. Proapolipoprotein C-II is synthesized as a sialic acid containing glycoprotein which is subsequently desialylated prior to its proteolytic processing. Post-translationally, proapolipoprotein C-II, the major form found in plasma undergoes proteolytic cleavage of its N-terminal hexapeptide to generate the mature form apolipoprotein C-II, which occurs as the minor form in plasma.

The protein localises to the secreted. Its function is as follows. Component of chylomicrons, very low-density lipoproteins (VLDL), low-density lipoproteins (LDL), and high-density lipoproteins (HDL) in plasma. Plays an important role in lipoprotein metabolism as an activator of lipoprotein lipase. This is Apolipoprotein C-II (Apoc2) from Neotoma lepida (Desert woodrat).